A 943-amino-acid chain; its full sequence is Isoleucine--tRNA ligase (943 aa).

Residues 59 to 69 (PYANGQIHLGH) carry the 'HIGH' region motif. Residue glutamate 577 participates in L-isoleucyl-5'-AMP binding. Residues 618 to 622 (KMSKS) carry the 'KMSKS' region motif. Residue lysine 621 coordinates ATP. The Zn(2+) site is built by cysteine 906, cysteine 909, cysteine 926, and cysteine 929.

Belongs to the class-I aminoacyl-tRNA synthetase family. IleS type 1 subfamily. Monomer. It depends on Zn(2+) as a cofactor.

It is found in the cytoplasm. It carries out the reaction tRNA(Ile) + L-isoleucine + ATP = L-isoleucyl-tRNA(Ile) + AMP + diphosphate. Functionally, catalyzes the attachment of isoleucine to tRNA(Ile). As IleRS can inadvertently accommodate and process structurally similar amino acids such as valine, to avoid such errors it has two additional distinct tRNA(Ile)-dependent editing activities. One activity is designated as 'pretransfer' editing and involves the hydrolysis of activated Val-AMP. The other activity is designated 'posttransfer' editing and involves deacylation of mischarged Val-tRNA(Ile). The chain is Isoleucine--tRNA ligase from Xanthomonas campestris pv. campestris (strain 8004).